The sequence spans 273 residues: Methylthioribulose-1-phosphate dehydratase (273 aa).

Residues 1-27 form a disordered region; that stretch reads MCPTCPPSAASASSENNNTDNNDHLVL. Position 114 (C114) interacts with substrate. Zn(2+)-binding residues include H132 and H134. Catalysis depends on E168, which acts as the Proton donor/acceptor. H225 contacts Zn(2+).

Belongs to the aldolase class II family. MtnB subfamily. The cofactor is Zn(2+).

The protein localises to the cytoplasm. It catalyses the reaction 5-(methylsulfanyl)-D-ribulose 1-phosphate = 5-methylsulfanyl-2,3-dioxopentyl phosphate + H2O. It functions in the pathway amino-acid biosynthesis; L-methionine biosynthesis via salvage pathway; L-methionine from S-methyl-5-thio-alpha-D-ribose 1-phosphate: step 2/6. Functionally, catalyzes the dehydration of methylthioribulose-1-phosphate (MTRu-1-P) into 2,3-diketo-5-methylthiopentyl-1-phosphate (DK-MTP-1-P). The protein is Methylthioribulose-1-phosphate dehydratase of Sordaria macrospora (strain ATCC MYA-333 / DSM 997 / K(L3346) / K-hell).